The following is a 457-amino-acid chain: ATP-dependent protease ATPase subunit HslU (457 aa).

Residues Ile-18 and 60–65 (GVGKTE) contribute to the ATP site. The segment at 142 to 171 (KQPGMGFFNPAAPEEQEEQPSADQSSTREK) is disordered. ATP-binding residues include Asp-269, Glu-335, and Arg-407.

It belongs to the ClpX chaperone family. HslU subfamily. In terms of assembly, a double ring-shaped homohexamer of HslV is capped on each side by a ring-shaped HslU homohexamer. The assembly of the HslU/HslV complex is dependent on binding of ATP.

It is found in the cytoplasm. In terms of biological role, ATPase subunit of a proteasome-like degradation complex; this subunit has chaperone activity. The binding of ATP and its subsequent hydrolysis by HslU are essential for unfolding of protein substrates subsequently hydrolyzed by HslV. HslU recognizes the N-terminal part of its protein substrates and unfolds these before they are guided to HslV for hydrolysis. This chain is ATP-dependent protease ATPase subunit HslU, found in Maridesulfovibrio salexigens (strain ATCC 14822 / DSM 2638 / NCIMB 8403 / VKM B-1763) (Desulfovibrio salexigens).